Reading from the N-terminus, the 581-residue chain is DNA polymerase alpha subunit B (581 aa).

Belongs to the DNA polymerase alpha subunit B family. In terms of assembly, DNA polymerase alpha:primase is a four subunit enzyme complex, which is assembled throughout the cell cycle, and consists of the two DNA polymerase subunits A and B, and the DNA primase large and small subunits. Subunit B binds to subunit A.

It is found in the nucleus. In terms of biological role, may play an essential role at the early stage of chromosomal DNA replication by coupling the polymerase alpha/primase complex to the cellular replication machinery. Required for the distribution of pie-1 in cell divsion. The polypeptide is DNA polymerase alpha subunit B (div-1) (Caenorhabditis elegans).